Here is a 343-residue protein sequence, read N- to C-terminus: S-adenosylmethionine:tRNA ribosyltransferase-isomerase (343 aa).

It belongs to the QueA family. Monomer.

Its subcellular location is the cytoplasm. The enzyme catalyses 7-aminomethyl-7-carbaguanosine(34) in tRNA + S-adenosyl-L-methionine = epoxyqueuosine(34) in tRNA + adenine + L-methionine + 2 H(+). The protein operates within tRNA modification; tRNA-queuosine biosynthesis. In terms of biological role, transfers and isomerizes the ribose moiety from AdoMet to the 7-aminomethyl group of 7-deazaguanine (preQ1-tRNA) to give epoxyqueuosine (oQ-tRNA). This is S-adenosylmethionine:tRNA ribosyltransferase-isomerase from Geotalea uraniireducens (strain Rf4) (Geobacter uraniireducens).